Reading from the N-terminus, the 224-residue chain is Octanoyltransferase (224 aa).

Residues 38–213 (AETTDEVWLL…QFVRAAGFQS (176 aa)) form the BPL/LPL catalytic domain. Substrate contacts are provided by residues 77 to 84 (RGGQVTYH), 144 to 146 (SLG), and 157 to 159 (GLA). Residue cysteine 175 is the Acyl-thioester intermediate of the active site.

The protein belongs to the LipB family.

The protein resides in the cytoplasm. It catalyses the reaction octanoyl-[ACP] + L-lysyl-[protein] = N(6)-octanoyl-L-lysyl-[protein] + holo-[ACP] + H(+). Its pathway is protein modification; protein lipoylation via endogenous pathway; protein N(6)-(lipoyl)lysine from octanoyl-[acyl-carrier-protein]: step 1/2. Catalyzes the transfer of endogenously produced octanoic acid from octanoyl-acyl-carrier-protein onto the lipoyl domains of lipoate-dependent enzymes. Lipoyl-ACP can also act as a substrate although octanoyl-ACP is likely to be the physiological substrate. The protein is Octanoyltransferase of Hahella chejuensis (strain KCTC 2396).